We begin with the raw amino-acid sequence, 452 residues long: Phosphoglucosamine mutase (452 aa).

Ser103 functions as the Phosphoserine intermediate in the catalytic mechanism. Ser103, Asp244, Asp246, and Asp248 together coordinate Mg(2+). The residue at position 103 (Ser103) is a Phosphoserine.

The protein belongs to the phosphohexose mutase family. Requires Mg(2+) as cofactor. Activated by phosphorylation.

It carries out the reaction alpha-D-glucosamine 1-phosphate = D-glucosamine 6-phosphate. Its function is as follows. Catalyzes the conversion of glucosamine-6-phosphate to glucosamine-1-phosphate. This Rhodospirillum rubrum (strain ATCC 11170 / ATH 1.1.1 / DSM 467 / LMG 4362 / NCIMB 8255 / S1) protein is Phosphoglucosamine mutase.